A 202-amino-acid polypeptide reads, in one-letter code: Putative pre-16S rRNA nuclease (202 aa).

Disordered stretches follow at residues 1-27 (MSGS…GVRI) and 170-202 (GCAA…SDER). A compositionally biased stretch (basic and acidic residues) spans 9–20 (GDSRPGDSRPGD).

The protein belongs to the YqgF nuclease family.

Its subcellular location is the cytoplasm. Functionally, could be a nuclease involved in processing of the 5'-end of pre-16S rRNA. The polypeptide is Putative pre-16S rRNA nuclease (Frankia casuarinae (strain DSM 45818 / CECT 9043 / HFP020203 / CcI3)).